The sequence spans 475 residues: Aspartyl/glutamyl-tRNA(Asn/Gln) amidotransferase subunit B (475 aa).

It belongs to the GatB/GatE family. GatB subfamily. Heterotrimer of A, B and C subunits.

The catalysed reaction is L-glutamyl-tRNA(Gln) + L-glutamine + ATP + H2O = L-glutaminyl-tRNA(Gln) + L-glutamate + ADP + phosphate + H(+). It carries out the reaction L-aspartyl-tRNA(Asn) + L-glutamine + ATP + H2O = L-asparaginyl-tRNA(Asn) + L-glutamate + ADP + phosphate + 2 H(+). Allows the formation of correctly charged Asn-tRNA(Asn) or Gln-tRNA(Gln) through the transamidation of misacylated Asp-tRNA(Asn) or Glu-tRNA(Gln) in organisms which lack either or both of asparaginyl-tRNA or glutaminyl-tRNA synthetases. The reaction takes place in the presence of glutamine and ATP through an activated phospho-Asp-tRNA(Asn) or phospho-Glu-tRNA(Gln). This Chlorobium limicola (strain DSM 245 / NBRC 103803 / 6330) protein is Aspartyl/glutamyl-tRNA(Asn/Gln) amidotransferase subunit B.